The primary structure comprises 68 residues: MRTSYLLLFTLCLLLSEMASGGNFLTGLGHRSDHYNCVSSGGQCLYSACPIFTKIQGTCYGGKAKCCK.

The first 21 residues, 1-21 (MRTSYLLLFTLCLLLSEMASG), serve as a signal peptide directing secretion. Residues 22-32 (GNFLTGLGHRS) constitute a propeptide that is removed on maturation. 3 disulfide bridges follow: Cys37–Cys66, Cys44–Cys59, and Cys49–Cys67.

Belongs to the beta-defensin family. As to quaternary structure, monomer. Homodimer.

The protein localises to the secreted. It localises to the membrane. Its function is as follows. Has bactericidal activity. May act as a ligand for C-C chemokine receptor CCR6. Positively regulates the sperm motility and bactericidal activity in a CCR6-dependent manner. Binds to CCR6 and triggers Ca2+ mobilization in the sperm which is important for its motility. The polypeptide is Beta-defensin 1 (DEFB1) (Pan troglodytes (Chimpanzee)).